A 271-amino-acid chain; its full sequence is uncharacterized protein (271 aa).

The signal sequence occupies residues 1–22; it reads MIHSKRLKLCLCLIILSVFIGA. C23 is lipidated: N-palmitoyl cysteine. A lipid anchor (S-diacylglycerol cysteine) is attached at C23.

It belongs to the staphylococcal tandem lipoprotein family.

It localises to the cell membrane. This is an uncharacterized protein from Staphylococcus aureus (strain MW2).